A 318-amino-acid chain; its full sequence is Carbamate kinase (318 aa).

Belongs to the carbamate kinase family.

The protein localises to the cytoplasm. The enzyme catalyses hydrogencarbonate + NH4(+) + ATP = carbamoyl phosphate + ADP + H2O + H(+). It functions in the pathway metabolic intermediate metabolism; carbamoyl phosphate degradation; CO(2) and NH(3) from carbamoyl phosphate: step 1/1. The sequence is that of Carbamate kinase (arcC) from Lentilactobacillus hilgardii (Lactobacillus hilgardii).